We begin with the raw amino-acid sequence, 149 residues long: MKYQQLENLECGWKWKYLIKKWKDGEAITRHIDTSEADAAIAELRRIEHEPTLVLAWIEKHMSEELENKLKQAIRAKRKRHFNAEQVHTKKKSIDLDYRVWEKLSNRANELGCTLSDAIEYLLSEASRSEKASQKVTSIKEDLSKLLSS.

The protein belongs to the MatP family. In terms of assembly, homodimer.

It is found in the cytoplasm. Functionally, required for spatial organization of the terminus region of the chromosome (Ter macrodomain) during the cell cycle. Prevents early segregation of duplicated Ter macrodomains during cell division. Binds specifically to matS, which is a 13 bp signature motif repeated within the Ter macrodomain. This is Macrodomain Ter protein from Vibrio parahaemolyticus serotype O3:K6 (strain RIMD 2210633).